The primary structure comprises 373 residues: Peptidoglycan recognition protein 4 (373 aa).

An N-terminal signal peptide occupies residues 1 to 17 (MLPWLLVFSALGIQAWG). Residues Asn22, Asn39, Asn109, Asn145, and Asn247 are each glycosylated (N-linked (GlcNAc...) asparagine). N-acetylmuramoyl-L-alanine amidase domains are found at residues 74–212 (TPVN…ACPG) and 235–358 (YGII…LSPG). Intrachain disulfides connect Cys210–Cys332, Cys226–Cys270, and Cys246–Cys252. 2 residues coordinate peptidoglycan: Tyr263 and Tyr274. 2 interaction with murein regions span residues 293–302 (QGSSTPGYDD) and 353–354 (RT).

The protein belongs to the N-acetylmuramoyl-L-alanine amidase 2 family. In terms of assembly, homodimer; disulfide-linked. Heterodimer with PGLYRP3; disulfide-linked. N-glycosylated. As to expression, detected in skin epidermis, eccrine sweat glands and ducts, mucous cells in the submandibular salivary gland, mucous cells in the throat, ciliary body epithelial cells of the eye, small intestine, colon, stomach and in mature epithelial cells of the tongue (at protein level). High expression in skin and esophagus. Expressed also to a much lesser extent in the tonsils and thymus.

Its subcellular location is the secreted. Its function is as follows. Pattern receptor that binds to murein peptidoglycans (PGN) of Gram-positive bacteria. Has bactericidal activity towards Gram-positive bacteria. May kill Gram-positive bacteria by interfering with peptidoglycan biosynthesis. Also binds to Gram-negative bacteria, and has bacteriostatic activity towards Gram-negative bacteria. Plays a role in innate immunity. The sequence is that of Peptidoglycan recognition protein 4 (PGLYRP4) from Homo sapiens (Human).